We begin with the raw amino-acid sequence, 171 residues long: S-ribosylhomocysteine lyase (171 aa).

His-54, His-58, and Cys-128 together coordinate Fe cation.

This sequence belongs to the LuxS family. In terms of assembly, homodimer. Fe cation is required as a cofactor.

The enzyme catalyses S-(5-deoxy-D-ribos-5-yl)-L-homocysteine = (S)-4,5-dihydroxypentane-2,3-dione + L-homocysteine. Involved in the synthesis of autoinducer 2 (AI-2) which is secreted by bacteria and is used to communicate both the cell density and the metabolic potential of the environment. The regulation of gene expression in response to changes in cell density is called quorum sensing. Catalyzes the transformation of S-ribosylhomocysteine (RHC) to homocysteine (HC) and 4,5-dihydroxy-2,3-pentadione (DPD). This chain is S-ribosylhomocysteine lyase, found in Escherichia coli O157:H7.